Consider the following 127-residue polypeptide: Ribosome-binding factor A (127 aa).

This sequence belongs to the RbfA family. Monomer. Binds 30S ribosomal subunits, but not 50S ribosomal subunits or 70S ribosomes.

It is found in the cytoplasm. Functionally, one of several proteins that assist in the late maturation steps of the functional core of the 30S ribosomal subunit. Associates with free 30S ribosomal subunits (but not with 30S subunits that are part of 70S ribosomes or polysomes). Required for efficient processing of 16S rRNA. May interact with the 5'-terminal helix region of 16S rRNA. The polypeptide is Ribosome-binding factor A (Rickettsia typhi (strain ATCC VR-144 / Wilmington)).